We begin with the raw amino-acid sequence, 266 residues long: Coiled-coil domain-containing glutamate-rich protein 2 (266 aa).

Residues 1 to 23 form the signal peptide; it reads MPPRGPASELLLLRLLLLGAATA. 4 stretches are compositionally biased toward basic and acidic residues: residues 90–100, 154–188, 204–213, and 221–266; these read EAGKMRSSQEV, LWQR…EKGV, GGGERREDLP, and QPEA…RREG. The tract at residues 90 to 266 is disordered; sequence EAGKMRSSQE…TLGEQLRREG (177 aa).

Expressed at higher levels in fetal brain and skeletal muscle. Lower expression is detected in fetal kidney, liver, spleen, thymus, heart and lung.

The protein resides in the secreted. The polypeptide is Coiled-coil domain-containing glutamate-rich protein 2 (CCER2) (Homo sapiens (Human)).